Reading from the N-terminus, the 472-residue chain is Tryptophan--tRNA ligase, cytoplasmic (472 aa).

A WHEP-TRS domain is found at Ser-9–Pro-65. Residue Lys-155 is modified to N6-succinyllysine. The short motif at Pro-165–His-174 is the 'HIGH' region element. The short motif at Lys-350–Ser-354 is the 'KMSKS' region element. A Phosphoserine modification is found at Ser-352.

It belongs to the class-I aminoacyl-tRNA synthetase family. Homodimer. Interacts with oxidized form of GAPDH. Post-translationally, proteolytic cleavage generates 2 forms; T1-TrpRS and T2-TrpRS.

The protein localises to the cytoplasm. It carries out the reaction tRNA(Trp) + L-tryptophan + ATP = L-tryptophyl-tRNA(Trp) + AMP + diphosphate + H(+). Functionally, catalyzes the attachment of tryptophan to tRNA(Trp) in a two-step reaction: tryptophan is first activated by ATP to form Trp-AMP and then transferred to the acceptor end of the tRNA(Trp). Could also possess an angiostatic activity. This Pongo abelii (Sumatran orangutan) protein is Tryptophan--tRNA ligase, cytoplasmic (WARS1).